Reading from the N-terminus, the 152-residue chain is uncharacterized protein (152 aa).

The VOC domain maps to 7–133 (PALSPHLVVD…FGHHWSLGQP (127 aa)).

This is an uncharacterized protein from Mycobacterium bovis (strain ATCC BAA-935 / AF2122/97).